Here is a 557-residue protein sequence, read N- to C-terminus: Dihydroxy-acid dehydratase (557 aa).

Cysteine 50 lines the [2Fe-2S] cluster pocket. Residue aspartate 82 participates in Mg(2+) binding. Residue cysteine 123 participates in [2Fe-2S] cluster binding. Aspartate 124 and lysine 125 together coordinate Mg(2+). Lysine 125 is subject to N6-carboxylysine. Cysteine 195 contributes to the [2Fe-2S] cluster binding site. Glutamate 447 is a Mg(2+) binding site. Residue serine 473 is the Proton acceptor of the active site.

Belongs to the IlvD/Edd family. In terms of assembly, homodimer. It depends on [2Fe-2S] cluster as a cofactor. Mg(2+) is required as a cofactor.

The enzyme catalyses (2R)-2,3-dihydroxy-3-methylbutanoate = 3-methyl-2-oxobutanoate + H2O. The catalysed reaction is (2R,3R)-2,3-dihydroxy-3-methylpentanoate = (S)-3-methyl-2-oxopentanoate + H2O. It participates in amino-acid biosynthesis; L-isoleucine biosynthesis; L-isoleucine from 2-oxobutanoate: step 3/4. It functions in the pathway amino-acid biosynthesis; L-valine biosynthesis; L-valine from pyruvate: step 3/4. In terms of biological role, functions in the biosynthesis of branched-chain amino acids. Catalyzes the dehydration of (2R,3R)-2,3-dihydroxy-3-methylpentanoate (2,3-dihydroxy-3-methylvalerate) into 2-oxo-3-methylpentanoate (2-oxo-3-methylvalerate) and of (2R)-2,3-dihydroxy-3-methylbutanoate (2,3-dihydroxyisovalerate) into 2-oxo-3-methylbutanoate (2-oxoisovalerate), the penultimate precursor to L-isoleucine and L-valine, respectively. The polypeptide is Dihydroxy-acid dehydratase (Herminiimonas arsenicoxydans).